A 156-amino-acid polypeptide reads, in one-letter code: ATP synthase subunit b (156 aa).

A helical transmembrane segment spans residues 7-27 (LIGQTVAFIIFVWFCMKFVWP).

It belongs to the ATPase B chain family. In terms of assembly, F-type ATPases have 2 components, F(1) - the catalytic core - and F(0) - the membrane proton channel. F(1) has five subunits: alpha(3), beta(3), gamma(1), delta(1), epsilon(1). F(0) has three main subunits: a(1), b(2) and c(10-14). The alpha and beta chains form an alternating ring which encloses part of the gamma chain. F(1) is attached to F(0) by a central stalk formed by the gamma and epsilon chains, while a peripheral stalk is formed by the delta and b chains.

Its subcellular location is the cell inner membrane. In terms of biological role, f(1)F(0) ATP synthase produces ATP from ADP in the presence of a proton or sodium gradient. F-type ATPases consist of two structural domains, F(1) containing the extramembraneous catalytic core and F(0) containing the membrane proton channel, linked together by a central stalk and a peripheral stalk. During catalysis, ATP synthesis in the catalytic domain of F(1) is coupled via a rotary mechanism of the central stalk subunits to proton translocation. Functionally, component of the F(0) channel, it forms part of the peripheral stalk, linking F(1) to F(0). In Shewanella sp. (strain ANA-3), this protein is ATP synthase subunit b.